The sequence spans 82 residues: Small ribosomal subunit protein bS18 (82 aa).

The disordered stretch occupies residues 1–20 (MVDINQIPTRRPFHRRRKTC).

This sequence belongs to the bacterial ribosomal protein bS18 family. In terms of assembly, part of the 30S ribosomal subunit. Forms a tight heterodimer with protein bS6.

Binds as a heterodimer with protein bS6 to the central domain of the 16S rRNA, where it helps stabilize the platform of the 30S subunit. This Brucella abortus (strain 2308) protein is Small ribosomal subunit protein bS18.